A 258-amino-acid chain; its full sequence is Cruciform cutting endonuclease 1, mitochondrial (258 aa).

In terms of domain architecture, SAP spans 1–35 (MATVKLSFLQHICKLTGLSRSGRKDELLRRIVDSP). Positions 46 and 230 each coordinate Mg(2+).

As to quaternary structure, homodimer.

The protein resides in the mitochondrion. The catalysed reaction is Endonucleolytic cleavage at a junction such as a reciprocal single-stranded crossover between two homologous DNA duplexes (Holliday junction).. In terms of biological role, capable of resolving Holliday junctions. Specific for 4-way junctions. Seems to be important for the maintenance of mitochondrial DNA. Cleaves fixed junctions at the point of strand exchange. Cleaves after 5'-CT-3' and 5'-TT-3' sequences. This is Cruciform cutting endonuclease 1, mitochondrial (cce1) from Schizosaccharomyces pombe (strain 972 / ATCC 24843) (Fission yeast).